We begin with the raw amino-acid sequence, 229 residues long: Large ribosomal subunit protein uL1 (229 aa).

The protein belongs to the universal ribosomal protein uL1 family. In terms of assembly, part of the 50S ribosomal subunit.

In terms of biological role, binds directly to 23S rRNA. The L1 stalk is quite mobile in the ribosome, and is involved in E site tRNA release. Its function is as follows. Protein L1 is also a translational repressor protein, it controls the translation of the L11 operon by binding to its mRNA. The polypeptide is Large ribosomal subunit protein uL1 (Mannheimia succiniciproducens (strain KCTC 0769BP / MBEL55E)).